The primary structure comprises 550 residues: 4-coumarate--CoA ligase-like 8 (550 aa).

ATP-binding residues include Ser207, Ser208, Gly209, Thr210, Thr211, and Lys215. Phe253 is a (E)-4-coumaroyl-AMP binding site. Residue Arg274 participates in CoA binding. The tract at residues 276-347 is SBD1; the sequence is DLGEMMAAVE…KKYPTVDVYQ (72 aa). (E)-4-coumaroyl-AMP-binding residues include Gly325, Gln347, Gly348, and Thr352. 5 residues coordinate ATP: Gln347, Gly348, Thr352, Asp430, and Arg445. An SBD2 region spans residues 348–412; the sequence is GYALTESNGA…LKGPSIAKGY (65 aa). Residues Lys447 and Lys451 each coordinate (E)-4-coumaroyl-AMP. The CoA site is built by Lys453 and Gly454. Lys536 is an ATP binding site. Positions 548 to 550 match the Microbody targeting signal motif; sequence SKI.

It belongs to the ATP-dependent AMP-binding enzyme family. It depends on Mg(2+) as a cofactor.

It is found in the peroxisome. The enzyme catalyses (E)-4-coumarate + ATP + CoA = (E)-4-coumaroyl-CoA + AMP + diphosphate. It catalyses the reaction (E)-4-coumarate + ATP + H(+) = (E)-4-coumaroyl-AMP + diphosphate. It carries out the reaction (E)-4-coumaroyl-AMP + CoA = (E)-4-coumaroyl-CoA + AMP + H(+). Carboxylate--CoA ligase that may use 4-coumarate as substrate. Follows a two-step reaction mechanism, wherein the carboxylate substrate first undergoes adenylation by ATP, followed by a thioesterification in the presence of CoA to yield the final CoA thioester. The protein is 4-coumarate--CoA ligase-like 8 of Arabidopsis thaliana (Mouse-ear cress).